Consider the following 192-residue polypeptide: Pyruvate synthase subunit PorC (192 aa).

As to quaternary structure, heterotetramer of one alpha, one beta, one delta and one gamma chain.

It carries out the reaction 2 oxidized [2Fe-2S]-[ferredoxin] + pyruvate + CoA = 2 reduced [2Fe-2S]-[ferredoxin] + acetyl-CoA + CO2 + H(+). The polypeptide is Pyruvate synthase subunit PorC (porC) (Thermotoga maritima (strain ATCC 43589 / DSM 3109 / JCM 10099 / NBRC 100826 / MSB8)).